Here is a 471-residue protein sequence, read N- to C-terminus: uncharacterized protein (471 aa).

Transmembrane regions (helical) follow at residues 15 to 35 (LWGPPLIILLTGTGLYFTILL), 66 to 86 (PLQALTSALSSTIGAANIVGV), 89 to 109 (AIMFGGPGAVFWMWLIALFAM), 147 to 167 (WLGVFFSVALIVELIPSIMVQ), 179 to 199 (FSFNKIYAGIGIAFLIGLVVI), 210 to 230 (EFVVPLMAGAYAGAGLLIVLM), 237 to 257 (AFFSLVFSNAFTSSSAVGGFA), 303 to 323 (VIGIVIDTLIICTTTAFIVLA), 353 to 373 (GYFVSVSLVFFVVSTIMVVIF), 386 to 406 (LAGHVIKFVYLAAIIIGAAGG), and 410 to 430 (IWGVLDLALVFIVVPNVIALL).

Belongs to the alanine or glycine:cation symporter (AGCS) (TC 2.A.25) family.

It is found in the cell membrane. This is an uncharacterized protein from Bacillus subtilis (strain 168).